The chain runs to 164 residues: Putative 4-hydroxy-4-methyl-2-oxoglutarate aldolase (164 aa).

Substrate is bound by residues 75–78 (GDML) and Arg97. Asp98 is a binding site for a divalent metal cation.

Belongs to the class II aldolase/RraA-like family. As to quaternary structure, homotrimer. A divalent metal cation is required as a cofactor.

The catalysed reaction is 4-hydroxy-4-methyl-2-oxoglutarate = 2 pyruvate. The enzyme catalyses oxaloacetate + H(+) = pyruvate + CO2. In terms of biological role, catalyzes the aldol cleavage of 4-hydroxy-4-methyl-2-oxoglutarate (HMG) into 2 molecules of pyruvate. Also contains a secondary oxaloacetate (OAA) decarboxylase activity due to the common pyruvate enolate transition state formed following C-C bond cleavage in the retro-aldol and decarboxylation reactions. This Hahella chejuensis (strain KCTC 2396) protein is Putative 4-hydroxy-4-methyl-2-oxoglutarate aldolase.